The chain runs to 219 residues: Large ribosomal subunit protein uL3 (219 aa).

Residues T113 to R142 form a disordered region.

Belongs to the universal ribosomal protein uL3 family. As to quaternary structure, part of the 50S ribosomal subunit. Forms a cluster with proteins L14 and L19.

One of the primary rRNA binding proteins, it binds directly near the 3'-end of the 23S rRNA, where it nucleates assembly of the 50S subunit. The chain is Large ribosomal subunit protein uL3 from Limosilactobacillus reuteri (strain DSM 20016) (Lactobacillus reuteri).